A 368-amino-acid polypeptide reads, in one-letter code: Probable auxin efflux carrier component 5b (368 aa).

The next 10 membrane-spanning stretches (helical) occupy residues 7–27 (VYKV…GYGS), 39–59 (CDAV…FDFA), 71–91 (VLAA…ACAA), 114–134 (CITG…VPLL), 145–165 (LIVQ…LLAF), 227–247 (VLGV…PSII), 251–271 (VLIM…LFMA), 286–306 (LGMA…AFAL), 312–332 (LLRL…FVFA), and 347–367 (IFGT…LGFI).

It belongs to the auxin efflux carrier (TC 2.A.69.1) family. In terms of tissue distribution, expressed at low levels in roots and shoot apex.

It is found in the membrane. Functionally, may act as a component of the auxin efflux carrier. In Oryza sativa subsp. japonica (Rice), this protein is Probable auxin efflux carrier component 5b.